Here is a 398-residue protein sequence, read N- to C-terminus: LIM domain-binding protein 2 (398 aa).

Disordered stretches follow at residues 245 to 280 and 354 to 398; these read PPAE…TSAY and DAAN…QASQ. The segment covering 263–279 has biased composition (low complexity); the sequence is STNNASNSNAGNNATSA. The LIM interaction domain (LID) domain occupies 323–362; the sequence is DVMVVGEPTLMGGEFGDEDERLITRLENTQYDAANGMDDE.

This sequence belongs to the LDB family. In terms of tissue distribution, expressed in adult brain, lung, spleen and kidney. Isoform b is generally expressed at a higher level than isoform a.

It is found in the nucleus. Its function is as follows. Binds to the LIM domain of a wide variety of LIM domain-containing transcription factors. In Xenopus laevis (African clawed frog), this protein is LIM domain-binding protein 2.